The primary structure comprises 133 residues: Small heat shock protein ibp (133 aa).

Residues 11 to 126 (EQPLSENPNY…KPKKISINEE (116 aa)) form the sHSP domain.

The protein belongs to the small heat shock protein (HSP20) family.

The protein is Small heat shock protein ibp (ibp) of Wigglesworthia glossinidia brevipalpis.